We begin with the raw amino-acid sequence, 677 residues long: DNA ligase (677 aa).

NAD(+) is bound by residues aspartate 35–aspartate 39, serine 84–leucine 85, and glutamate 115. Lysine 117 serves as the catalytic N6-AMP-lysine intermediate. The NAD(+) site is built by arginine 138, glutamate 177, lysine 296, and lysine 320. Cysteine 414, cysteine 417, cysteine 432, and cysteine 437 together coordinate Zn(2+). One can recognise a BRCT domain in the interval asparagine 599 to glutamate 677.

Belongs to the NAD-dependent DNA ligase family. LigA subfamily. Requires Mg(2+) as cofactor. The cofactor is Mn(2+).

The enzyme catalyses NAD(+) + (deoxyribonucleotide)n-3'-hydroxyl + 5'-phospho-(deoxyribonucleotide)m = (deoxyribonucleotide)n+m + AMP + beta-nicotinamide D-nucleotide.. Functionally, DNA ligase that catalyzes the formation of phosphodiester linkages between 5'-phosphoryl and 3'-hydroxyl groups in double-stranded DNA using NAD as a coenzyme and as the energy source for the reaction. It is essential for DNA replication and repair of damaged DNA. This chain is DNA ligase, found in Nostoc sp. (strain PCC 7120 / SAG 25.82 / UTEX 2576).